Reading from the N-terminus, the 109-residue chain is T cell receptor alpha variable 27 (109 aa).

The N-terminal stretch at 1 to 19 (MVLKFSVSILWIQLAWVST) is a signal peptide. Positions 20-109 (QLLEQSPQFL…GDTGLYLCAG (90 aa)) constitute an Ig-like domain. 2 N-linked (GlcNAc...) asparagine glycosylation sites follow: N36 and N42. A disulfide bridge connects residues C41 and C107.

Alpha-beta TR is a heterodimer composed of an alpha and beta chain; disulfide-linked. The alpha-beta TR is associated with the transmembrane signaling CD3 coreceptor proteins to form the TR-CD3 (TcR or TCR). The assembly of alpha-beta TR heterodimers with CD3 occurs in the endoplasmic reticulum where a single alpha-beta TR heterodimer associates with one CD3D-CD3E heterodimer, one CD3G-CD3E heterodimer and one CD247 homodimer forming a stable octameric structure. CD3D-CD3E and CD3G-CD3E heterodimers preferentially associate with TR alpha and TR beta chains, respectively. The association of the CD247 homodimer is the last step of TcR assembly in the endoplasmic reticulum and is required for transport to the cell surface. In terms of assembly, (Microbial infection) Interacts with Staphylococcus aureus enterotoxin H/entH.

It is found in the cell membrane. Functionally, v region of the variable domain of T cell receptor (TR) alpha chain that participates in the antigen recognition. Alpha-beta T cell receptors are antigen specific receptors which are essential to the immune response and are present on the cell surface of T lymphocytes. Recognize peptide-major histocompatibility (MH) (pMH) complexes that are displayed by antigen presenting cells (APC), a prerequisite for efficient T cell adaptive immunity against pathogens. Binding of alpha-beta TR to pMH complex initiates TR-CD3 clustering on the cell surface and intracellular activation of LCK that phosphorylates the ITAM motifs of CD3G, CD3D, CD3E and CD247 enabling the recruitment of ZAP70. In turn, ZAP70 phosphorylates LAT, which recruits numerous signaling molecules to form the LAT signalosome. The LAT signalosome propagates signal branching to three major signaling pathways, the calcium, the mitogen-activated protein kinase (MAPK) kinase and the nuclear factor NF-kappa-B (NF-kB) pathways, leading to the mobilization of transcription factors that are critical for gene expression and essential for T cell growth and differentiation. The T cell repertoire is generated in the thymus, by V-(D)-J rearrangement. This repertoire is then shaped by intrathymic selection events to generate a peripheral T cell pool of self-MH restricted, non-autoaggressive T cells. Post-thymic interaction of alpha-beta TR with the pMH complexes shapes TR structural and functional avidity. The sequence is that of T cell receptor alpha variable 27 from Homo sapiens (Human).